Here is a 423-residue protein sequence, read N- to C-terminus: Serine hydroxymethyltransferase (423 aa).

121–123 (GHI) is a (6S)-5,6,7,8-tetrahydrofolate binding site. An N6-(pyridoxal phosphate)lysine modification is found at K227. Residue E242 coordinates (6S)-5,6,7,8-tetrahydrofolate.

The protein belongs to the SHMT family. In terms of assembly, homodimer. Requires pyridoxal 5'-phosphate as cofactor.

It is found in the cytoplasm. It catalyses the reaction 5,10-methylenetetrahydromethanopterin + glycine + H2O = 5,6,7,8-tetrahydromethanopterin + L-serine. It functions in the pathway amino-acid biosynthesis; glycine biosynthesis; glycine from L-serine: step 1/1. Functionally, catalyzes the reversible interconversion of serine and glycine with tetrahydromethanopterin (H4MPT) serving as the one-carbon carrier. Also exhibits a pteridine-independent aldolase activity toward beta-hydroxyamino acids, producing glycine and aldehydes, via a retro-aldol mechanism. This Methanothermobacter marburgensis (strain ATCC BAA-927 / DSM 2133 / JCM 14651 / NBRC 100331 / OCM 82 / Marburg) (Methanobacterium thermoautotrophicum) protein is Serine hydroxymethyltransferase.